The chain runs to 352 residues: C-C chemokine receptor type 5 (352 aa).

Over 1-30 the chain is Extracellular; it reads MDYQVSSPTYDIDYYTSEPCQKIKVKQIAA. Y3 bears the Sulfotyrosine mark. 2 O-linked (GalNAc...) serine glycosylation sites follow: S6 and S7. Sulfotyrosine is present on residues Y10, Y14, and Y15. 2 disulfide bridges follow: C20–C269 and C101–C178. The helical transmembrane segment at 31 to 58 threads the bilayer; it reads RLLPPLYSLVFIFGFVGNILVVLILINC. The Cytoplasmic portion of the chain corresponds to 59–68; sequence KRLKSMTDIY. The helical transmembrane segment at 69–89 threads the bilayer; sequence LLNLAISDLLFLLTVPFWAHY. Topologically, residues 90–102 are extracellular; the sequence is AAAQWDFGNTMCQ. Residues 103–124 traverse the membrane as a helical segment; it reads LLTGLYFIGFFSGIFFIILLTI. The Cytoplasmic segment spans residues 125 to 141; it reads DRYLAIVHAVFALKART. Residues 142–166 form a helical membrane-spanning segment; that stretch reads VTFGVVTSVITWVVAVFASLPRIIF. Over 167-198 the chain is Extracellular; the sequence is TRSQREGLHYTCSSHFPYSQYQFWKNFQTLKI. Residues 199–218 form a helical membrane-spanning segment; it reads VILGLVLPLLVMVICYSGIL. Residues 219-235 lie on the Cytoplasmic side of the membrane; that stretch reads KTLLRCRNDKKRHRAVR. Residues 236 to 260 traverse the membrane as a helical segment; sequence LIFTIMIVYFLFWAPYNIVLLLNTF. At 261 to 277 the chain is on the extracellular side; the sequence is QEFFGLNNCSSSNRLDQ. The helical transmembrane segment at 278–301 threads the bilayer; the sequence is AMQVTETLGMTHCCINPIIYAFVG. The Cytoplasmic portion of the chain corresponds to 302-352; the sequence is EKFRNYLLVFFQKHIAKRFCKCCSIFQQDAPERASSVYTRSTGEQETSVGL. Residues C321, C323, and C324 are each lipidated (S-palmitoyl cysteine). Phosphoserine; by BARK1 occurs at positions 336, 337, 342, and 349.

The protein belongs to the G-protein coupled receptor 1 family. In terms of assembly, interacts with PRAF2. Efficient ligand binding to CCL3/MIP-1alpha and CCL4/MIP-1beta requires sulfation, O-glycosylation and sialic acid modifications. Glycosylation on Ser-6 is required for efficient binding of CCL4. Interacts with GRK2. Interacts with ARRB1 and ARRB2. Interacts with CNIH4. Interacts with S100A4; this interaction stimulates T-lymphocyte chemotaxis. In terms of processing, sulfated on at least 2 of the N-terminal tyrosines. Sulfation is required for efficient binding of the chemokines, CCL3 and CCL4. Palmitoylation in the C-terminal is important for cell surface expression. Post-translationally, phosphorylation on serine residues in the C-terminal is stimulated by binding CC chemokines especially by APO-RANTES. In terms of processing, O-glycosylated, but not N-glycosylated. Ser-6 appears to be the major site even if Ser-7 may be also O-glycosylated. Also sialylated glycans present which contribute to chemokine binding. Thr-16 and Ser-17 may also be glycosylated and, if so, with small moieties such as a T-antigen.

The protein localises to the cell membrane. In terms of biological role, receptor for a number of inflammatory CC-chemokines including CCL3/MIP-1-alpha, CCL4/MIP-1-beta and RANTES and subsequently transduces a signal by increasing the intracellular calcium ion level. May play a role in the control of granulocytic lineage proliferation or differentiation. Participates in T-lymphocyte migration to the infection site by acting as a chemotactic receptor. This Chlorocebus sabaeus (Green monkey) protein is C-C chemokine receptor type 5 (CCR5).